Consider the following 153-residue polypeptide: Mitochondrial fission 1 protein (153 aa).

At 1–124 (MTQLPYAVDA…LIDDKVTKEG (124 aa)) the chain is on the cytoplasmic side. The TPR repeat unit spans residues 73–106 (RECLYYLALGNYKLGNYAQARKYNDALLENEPAN). A helical transmembrane segment spans residues 125-145 (LMGVAIISGVAVAAGVIGGVL). Residues 146–153 (LRNLGRKR) are Mitochondrial intermembrane-facing.

This sequence belongs to the FIS1 family.

It localises to the mitochondrion outer membrane. In terms of biological role, has a role in mitochondrial fission. Has a role in outer membrane fission but not matrix separation. The sequence is that of Mitochondrial fission 1 protein (mtp-2) from Neurospora crassa (strain ATCC 24698 / 74-OR23-1A / CBS 708.71 / DSM 1257 / FGSC 987).